The primary structure comprises 683 residues: Leucine-rich repeat and calponin homology domain-containing protein 4 (683 aa).

Low complexity predominate over residues 1-18 (MAAAVAAPLAAGGEEAAA). Residues 1-34 (MAAAVAAPLAAGGEEAAATTSVPGSPGLPGRRSA) are disordered. LRR repeat units lie at residues 41-64 (AVAT…AARS), 67-90 (LSDI…ACQL), 92-113 (SLEG…LGNL), 114-136 (TALT…ICQL), 138-158 (LRVL…IGTL), 159-181 (GSLR…LCGL), 182-204 (SSLR…LGDL), 206-226 (LVRL…FCRL), and 227-250 (RHLQ…CLKG). Residues 268–292 (ALGDLAPSRPPSFSPCPAEDLFPGH) are disordered. Phosphoserine is present on residues S279, S281, S304, S307, S309, and S313. 2 disordered regions span residues 326–436 (FRIS…LLKP) and 449–539 (STQA…DEKD). 3 stretches are compositionally biased toward basic and acidic residues: residues 330-345 (ELAR…KEDG), 357-376 (IDSH…EQRP), and 384-418 (GDRE…ERRQ). Residues S432 and S457 each carry the phosphoserine modification. Over residues 449–460 (STQAMHNGSPKS) the composition is skewed to polar residues. 2 stretches are compositionally biased toward low complexity: residues 461–481 (SASQ…PASQ) and 511–524 (SSSQ…SPDS). A phosphoserine mark is found at S511, S513, S517, S521, and S589. The Calponin-homology (CH) domain maps to 534 to 647 (VPDEKDLMTQ…ALEAVKRVGG (114 aa)). Residues 653 to 673 (LWPPSGLGGFVVFYVVLMLLL) traverse the membrane as a helical segment.

The protein resides in the cell membrane. Its function is as follows. Accessory protein that regulates signaling by multiple TLRs, acting as a broad-spanning regulator of the innate immune response. In macrophages, binds LPS and promotes proper docking of LPS in lipid raft membrane. May be required for lipid raft maintenance. This is Leucine-rich repeat and calponin homology domain-containing protein 4 from Homo sapiens (Human).